Here is a 392-residue protein sequence, read N- to C-terminus: Hercynylcysteine sulfoxide lyase (392 aa).

N6-(pyridoxal phosphate)lysine is present on K219.

This sequence belongs to the class-V pyridoxal-phosphate-dependent aminotransferase family. EgtE subfamily. It depends on pyridoxal 5'-phosphate as a cofactor.

Its subcellular location is the cytoplasm. It localises to the nucleus. The enzyme catalyses S-(hercyn-2-yl)-L-cysteine S-oxide + AH2 + H(+) = ergothioneine + pyruvate + A + NH4(+). It participates in amino-acid biosynthesis; ergothioneine biosynthesis. Catalyzes the conversion of hercynylcysteine sulfoxide to ergothioneine by cleaving the cysteine residue at the sulfur atom, the last step in the biosynthesis pathway of ergothioneine. In Schizosaccharomyces pombe (strain 972 / ATCC 24843) (Fission yeast), this protein is Hercynylcysteine sulfoxide lyase.